A 599-amino-acid polypeptide reads, in one-letter code: MSISEKPLSELLRPKDFEDFVGQDHIFGNKGILRRTLKTGNMFSSILYGPPGSGKTSVFSLLKRYFNGEVVYLSSTVHGVSEIKNVLKRGEQLRKYGKKLLLFLDEIHRLNKNQQMVLVSHVERGDIVLVATTTENPSFVIVPALLSRCRILYFKKLSDEDLMKILKKATEVLNIDLEESVEKAIVRHSEGDARKLLNTLEIVHQAFKNKRVTLEDLETLLGNVSGYTKESHYDFASAFIKSMRGSDPNAAVYYLVKMIEMGEDPRFIARRMIIFASEDVGLADPNALHIAVSTSIAVEHVGLPECLMNLVECAVYLSLAPKSNSVYLAMKKVQELPVEDVPLFLRNPVTEEMKKRGYGEGYLYPHDFGGFVKTNYLPEKLKNEVIFQPKRVGFEEELFERLRKLWPEKYGGESMAEVRKELEYKGKKIRIVKGDITREEVDAIVNAANEYLKHGGGVAGAIVRAGGSVIQEESDRIVQERGRVPTGEAVVTSAGKLKAKYVIHTVGPVWRGGSHGEDELLYKAVYNALLRAHELKLKSISMPAISTGIFGFPKERAVGIFSKAIRDFIDQHPDTTLEEIRICNIDEETTKIFEEKFSV.

49 to 56 (GPPGSGKT) lines the ATP pocket. Residues 416–599 (AEVRKELEYK…TKIFEEKFSV (184 aa)) enclose the Macro domain.

It in the N-terminal section; belongs to the AAA ATPase family. RarA/MGS1/WRNIP1 subfamily.

This is an uncharacterized protein from Thermotoga maritima (strain ATCC 43589 / DSM 3109 / JCM 10099 / NBRC 100826 / MSB8).